An 86-amino-acid chain; its full sequence is Small ribosomal subunit protein bS16 (86 aa).

This sequence belongs to the bacterial ribosomal protein bS16 family.

This is Small ribosomal subunit protein bS16 from Leptothrix cholodnii (strain ATCC 51168 / LMG 8142 / SP-6) (Leptothrix discophora (strain SP-6)).